The following is a 540-amino-acid chain: Chaperonin GroEL (540 aa).

Residues 30–33, Lys51, 87–91, Gly415, 479–481, and Asp495 each bind ATP; these read TLAP, DGTTT, and NAA.

It belongs to the chaperonin (HSP60) family. In terms of assembly, forms a cylinder of 14 subunits composed of two heptameric rings stacked back-to-back. Interacts with the co-chaperonin GroES.

It is found in the cytoplasm. It catalyses the reaction ATP + H2O + a folded polypeptide = ADP + phosphate + an unfolded polypeptide.. Together with its co-chaperonin GroES, plays an essential role in assisting protein folding. The GroEL-GroES system forms a nano-cage that allows encapsulation of the non-native substrate proteins and provides a physical environment optimized to promote and accelerate protein folding. The protein is Chaperonin GroEL of Methylovorus sp. (strain SS1 / DSM 11726).